The primary structure comprises 193 residues: dCTP deaminase (193 aa).

Residues Arg110–Arg115, Asp128, Val136–Glu138, Tyr171, Lys178, and Gln182 each bind dCTP. The active-site Proton donor/acceptor is the Glu138. Positions Tyr171 to Asp193 are disordered.

The protein belongs to the dCTP deaminase family. As to quaternary structure, homotrimer.

The catalysed reaction is dCTP + H2O + H(+) = dUTP + NH4(+). It participates in pyrimidine metabolism; dUMP biosynthesis; dUMP from dCTP (dUTP route): step 1/2. In terms of biological role, catalyzes the deamination of dCTP to dUTP. The polypeptide is dCTP deaminase (Shewanella oneidensis (strain ATCC 700550 / JCM 31522 / CIP 106686 / LMG 19005 / NCIMB 14063 / MR-1)).